A 262-amino-acid polypeptide reads, in one-letter code: Octopine permease ATP-binding protein P (262 aa).

In terms of domain architecture, ABC transporter spans 9 to 254 (VKLTGIRKNF…PRTERFRQFL (246 aa)). 41-48 (GSSGSGKS) contacts ATP.

Belongs to the ABC transporter superfamily.

It is found in the cell inner membrane. In terms of biological role, component of the octopine active transport system probably consisting of four subunits: Q, M, P and T. This chain is Octopine permease ATP-binding protein P (occP), found in Rhizobium meliloti (Ensifer meliloti).